Consider the following 214-residue polypeptide: Dephospho-CoA kinase (214 aa).

Positions 4–204 constitute a DPCK domain; the sequence is IVGLTGGIGS…QRYLQLAQQK (201 aa). 12–17 is an ATP binding site; that stretch reads GSGKST.

Belongs to the CoaE family.

Its subcellular location is the cytoplasm. It carries out the reaction 3'-dephospho-CoA + ATP = ADP + CoA + H(+). It functions in the pathway cofactor biosynthesis; coenzyme A biosynthesis; CoA from (R)-pantothenate: step 5/5. Catalyzes the phosphorylation of the 3'-hydroxyl group of dephosphocoenzyme A to form coenzyme A. This Mannheimia succiniciproducens (strain KCTC 0769BP / MBEL55E) protein is Dephospho-CoA kinase.